We begin with the raw amino-acid sequence, 658 residues long: UvrABC system protein B (658 aa).

In terms of domain architecture, Helicase ATP-binding spans 26-414; sequence AGLKKGLKHQ…PDVIEQIIRP (389 aa). Position 39–46 (39–46) interacts with ATP; it reads GATGTGKT. Positions 92–115 match the Beta-hairpin motif; the sequence is YYDYYQPEAYVPQSDTYIEKDASI. The 163-residue stretch at 430–592 folds into the Helicase C-terminal domain; the sequence is QIDDLMDEIN…ITPKTIRKEI (163 aa). Positions 622-658 constitute a UVR domain; sequence DIFIEGMEHEMKEAAKALDFERAAELRDALLEIKAEG.

This sequence belongs to the UvrB family. As to quaternary structure, forms a heterotetramer with UvrA during the search for lesions. Interacts with UvrC in an incision complex.

It localises to the cytoplasm. The UvrABC repair system catalyzes the recognition and processing of DNA lesions. A damage recognition complex composed of 2 UvrA and 2 UvrB subunits scans DNA for abnormalities. Upon binding of the UvrA(2)B(2) complex to a putative damaged site, the DNA wraps around one UvrB monomer. DNA wrap is dependent on ATP binding by UvrB and probably causes local melting of the DNA helix, facilitating insertion of UvrB beta-hairpin between the DNA strands. Then UvrB probes one DNA strand for the presence of a lesion. If a lesion is found the UvrA subunits dissociate and the UvrB-DNA preincision complex is formed. This complex is subsequently bound by UvrC and the second UvrB is released. If no lesion is found, the DNA wraps around the other UvrB subunit that will check the other stand for damage. In Listeria innocua serovar 6a (strain ATCC BAA-680 / CLIP 11262), this protein is UvrABC system protein B.